Consider the following 393-residue polypeptide: Flavohemoprotein (393 aa).

The Globin domain maps to 1 to 139 (MLSAEHRAIV…LADLLIGLEE (139 aa)). Heme b is bound at residue His-85. Active-site charge relay system residues include Tyr-95 and Glu-138. The interval 150 to 393 (GGWRGTRAFV…EFFGPASALD (244 aa)) is reductase. The FAD-binding FR-type domain occupies 153–256 (RGTRAFVVAR…LTPSGDFTLE (104 aa)). Residues Tyr-191 and 205–208 (RNYS) contribute to the FAD site. Residue 268–273 (GVGITP) coordinates NADP(+). 385–388 (FFGP) contacts FAD.

Belongs to the globin family. Two-domain flavohemoproteins subfamily. The protein in the C-terminal section; belongs to the flavoprotein pyridine nucleotide cytochrome reductase family. It depends on heme b as a cofactor. Requires FAD as cofactor.

It catalyses the reaction 2 nitric oxide + NADPH + 2 O2 = 2 nitrate + NADP(+) + H(+). The catalysed reaction is 2 nitric oxide + NADH + 2 O2 = 2 nitrate + NAD(+) + H(+). In terms of biological role, is involved in NO detoxification in an aerobic process, termed nitric oxide dioxygenase (NOD) reaction that utilizes O(2) and NAD(P)H to convert NO to nitrate, which protects the bacterium from various noxious nitrogen compounds. Therefore, plays a central role in the inducible response to nitrosative stress. This chain is Flavohemoprotein, found in Burkholderia sp. (strain TH2).